The primary structure comprises 383 residues: 1-deoxy-D-xylulose 5-phosphate reductoisomerase (383 aa).

NADPH-binding residues include threonine 10, glycine 11, serine 12, isoleucine 13, asparagine 38, and asparagine 121. Lysine 122 lines the 1-deoxy-D-xylulose 5-phosphate pocket. Glutamate 123 contacts NADPH. Mn(2+) is bound at residue aspartate 147. Serine 148, glutamate 149, serine 172, and histidine 195 together coordinate 1-deoxy-D-xylulose 5-phosphate. Glutamate 149 contributes to the Mn(2+) binding site. NADPH is bound at residue glycine 201. 1-deoxy-D-xylulose 5-phosphate is bound by residues serine 208, asparagine 213, lysine 214, and glutamate 217. A Mn(2+)-binding site is contributed by glutamate 217.

Belongs to the DXR family. Mg(2+) is required as a cofactor. Requires Mn(2+) as cofactor.

It carries out the reaction 2-C-methyl-D-erythritol 4-phosphate + NADP(+) = 1-deoxy-D-xylulose 5-phosphate + NADPH + H(+). Its pathway is isoprenoid biosynthesis; isopentenyl diphosphate biosynthesis via DXP pathway; isopentenyl diphosphate from 1-deoxy-D-xylulose 5-phosphate: step 1/6. Catalyzes the NADPH-dependent rearrangement and reduction of 1-deoxy-D-xylulose-5-phosphate (DXP) to 2-C-methyl-D-erythritol 4-phosphate (MEP). This Ruthia magnifica subsp. Calyptogena magnifica protein is 1-deoxy-D-xylulose 5-phosphate reductoisomerase.